Consider the following 365-residue polypeptide: 3-dehydroquinate synthase (365 aa).

Residues 72 to 77, 130 to 131, Lys-142, and Lys-151 each bind NAD(+); these read SGEKEK and TT. The Zn(2+) site is built by Glu-184, His-247, and His-264.

The protein belongs to the sugar phosphate cyclases superfamily. Dehydroquinate synthase family. The cofactor is Co(2+). It depends on Zn(2+) as a cofactor. NAD(+) serves as cofactor.

The protein localises to the cytoplasm. The enzyme catalyses 7-phospho-2-dehydro-3-deoxy-D-arabino-heptonate = 3-dehydroquinate + phosphate. Its pathway is metabolic intermediate biosynthesis; chorismate biosynthesis; chorismate from D-erythrose 4-phosphate and phosphoenolpyruvate: step 2/7. Catalyzes the conversion of 3-deoxy-D-arabino-heptulosonate 7-phosphate (DAHP) to dehydroquinate (DHQ). The polypeptide is 3-dehydroquinate synthase (Bacillus cereus (strain AH187)).